Here is a 550-residue protein sequence, read N- to C-terminus: Hydroxylamine reductase (550 aa).

The [2Fe-2S] cluster site is built by Cys3, Cys6, Cys18, and Cys25. The hybrid [4Fe-2O-2S] cluster site is built by His249, Glu273, Cys317, Cys405, Cys433, Cys458, Glu492, and Lys494. Cys405 bears the Cysteine persulfide mark.

The protein belongs to the HCP family. Requires [2Fe-2S] cluster as cofactor. It depends on hybrid [4Fe-2O-2S] cluster as a cofactor.

The protein localises to the cytoplasm. The catalysed reaction is A + NH4(+) + H2O = hydroxylamine + AH2 + H(+). Its function is as follows. Catalyzes the reduction of hydroxylamine to form NH(3) and H(2)O. This Salmonella typhi protein is Hydroxylamine reductase.